The sequence spans 82 residues: uncharacterized protein (82 aa).

This is an uncharacterized protein from Saccharomyces cerevisiae (strain ATCC 204508 / S288c) (Baker's yeast).